The chain runs to 267 residues: GTP cyclohydrolase FolE2 (267 aa).

This sequence belongs to the GTP cyclohydrolase IV family.

It catalyses the reaction GTP + H2O = 7,8-dihydroneopterin 3'-triphosphate + formate + H(+). Its pathway is cofactor biosynthesis; 7,8-dihydroneopterin triphosphate biosynthesis; 7,8-dihydroneopterin triphosphate from GTP: step 1/1. In terms of biological role, converts GTP to 7,8-dihydroneopterin triphosphate. In Geobacter sp. (strain M21), this protein is GTP cyclohydrolase FolE2.